A 246-amino-acid chain; its full sequence is MNNNTTAPTYTLRGLQLIGWRDMQHALDYLFADGHLKQGTLVAINAEKMLTIEDNAEVRELINAAEFKYADGISVVRSVRKKYPQAQVSRVAGADLWEELMARAGKEGTPVFLVGGKPEVLAQTEAKLRNQWNVNIVGSQDGYFKPEQRQALFERIHASGAQIVTVAMGSPKQEIFMRDCRLVHPDALYMGVGGTYDVFTGHVKRAPKIWQTLGLEWLYRLLSQPSRIKRQLRLLRYLRWHYTGNL.

Belongs to the glycosyltransferase 26 family.

The enzyme catalyses UDP-N-acetyl-alpha-D-mannosaminouronate + N-acetyl-alpha-D-glucosaminyl-di-trans,octa-cis-undecaprenyl diphosphate = beta-D-ManNAcA-(1-&gt;4)-alpha-D-GlcNAc-di-trans,octa-cis-undecaprenyl diphosphate + UDP + H(+). Its pathway is bacterial outer membrane biogenesis; enterobacterial common antigen biosynthesis. Its function is as follows. Catalyzes the synthesis of Und-PP-GlcNAc-ManNAcA (Lipid II), the second lipid-linked intermediate involved in enterobacterial common antigen (ECA) synthesis. This is UDP-N-acetyl-D-mannosaminuronic acid transferase from Escherichia coli (strain ATCC 8739 / DSM 1576 / NBRC 3972 / NCIMB 8545 / WDCM 00012 / Crooks).